Reading from the N-terminus, the 253-residue chain is MSCTIEKALADAKALVERLRDHDDAAESLIEQTTALSKRVEAMKQYQEEIQELNEVARHRPRSTLVMGIQQENRQIRELQQENKELRTSLEEHQSALELIMSKYREQMFRLLMASKKDDPGIIMKLKEQHSKIDMVHRNSCEGFFLDASRHILEAPQHGLERRHLEANQNELQAHVDQITEMAAVMRKAIEIDEQQGCKEQERIFQLEQENKGLREILQITRESFLNLRKDDASESTSLSALVTNSDLSLRKS.

Positions 5 to 104 form a coiled coil; sequence IEKALADAKA…SALELIMSKY (100 aa). S140 is subject to Phosphoserine. A coiled-coil region spans residues 160–223; sequence LERRHLEANQ…LREILQITRE (64 aa). Positions 231–253 are disordered; the sequence is DDASESTSLSALVTNSDLSLRKS. A compositionally biased stretch (polar residues) spans 235–253; that stretch reads ESTSLSALVTNSDLSLRKS.

The protein belongs to the SIKE family.

Its subcellular location is the cytoplasm. May be involved in wound healing pathway. The sequence is that of FGFR1 oncogene partner 2 homolog (Fgfr1op2) from Mus musculus (Mouse).